A 203-amino-acid chain; its full sequence is Ras-like protein family member 10A (203 aa).

Residues 1-203 (MGGSLRVAVL…ALHPARCSLM (203 aa)) form a small GTPase-like region. GTP is bound at residue 11–18 (GAPGVGKT). The Effector region signature appears at 33–42 (HRPTDGPRLY). GTP is bound by residues 59–62 (DGDV) and 129–132 (NKRD). Cysteine 200 is modified (cysteine methyl ester). Residue cysteine 200 is the site of S-farnesyl cysteine attachment. The propeptide at 201 to 203 (SLM) is removed in mature form.

This sequence belongs to the small GTPase superfamily. Ras family. Post-translationally, isoprenylation is essential for nucleolar localization, and the proliferation-inhibiting activity of RASL10A. In terms of tissue distribution, expression appears to be strictly limited to the central nervous system.

It localises to the cell membrane. The protein localises to the nucleus. It is found in the nucleolus. The enzyme catalyses GTP + H2O = GDP + phosphate + H(+). In terms of biological role, potent inhibitor of cellular proliferation. This chain is Ras-like protein family member 10A (RASL10A), found in Homo sapiens (Human).